A 563-amino-acid chain; its full sequence is Arginine--tRNA ligase (563 aa).

A 'HIGH' region motif is present at residues 120 to 130; the sequence is PNIAKPFHVGH.

It belongs to the class-I aminoacyl-tRNA synthetase family. In terms of assembly, monomer.

Its subcellular location is the cytoplasm. The catalysed reaction is tRNA(Arg) + L-arginine + ATP = L-arginyl-tRNA(Arg) + AMP + diphosphate. The polypeptide is Arginine--tRNA ligase (Clostridium acetobutylicum (strain ATCC 824 / DSM 792 / JCM 1419 / IAM 19013 / LMG 5710 / NBRC 13948 / NRRL B-527 / VKM B-1787 / 2291 / W)).